A 517-amino-acid polypeptide reads, in one-letter code: MVVTSSAGCASRPRGRGRWPRLSRRSGCLEVPGRPRRPFLRPTVPGPTSARPRRGRAPHGRSTRCTGWRVQLSFSCPPFIKNRQFQFYLIRSPFSRVGYGLSDVNSSSLLGLWGIKFFACWENSNMIYIFKMLGYNQDKLPITSERLVPMASSISPEKLGAKIVEWYSCIVSREVEQAEEYKQEIGQLVNQLERSDEKVLSYYSLVLFRHQLLTEDVQQKRVEPTSLQAVNVEDTIYDGLLAFLYYFMSGQYEFYEGRYQSALRLYKIAEQKIDHVHDQSEKAEFYFRLGESYFAHHQYTFAVSYLEQAIDLFENNNFIWTILNCRLLLAAIKTELNLFDEAEKEYQSALADATPYPTTHALLLRALGLNRVRQRKLYEAEMYFAEALTIGDHSKSVEGLKTKANLANVRLRQNANNAEAIRLLQEAKAGATAIHLEECMVRCAITEALYINEGRDERLTSELQRLLEREFYTEYSELAEEIAEYYKQQSLLEKAFYYMKEALHYRTNMKMIGVEQQ.

2 disordered regions span residues 1–21 (MVVT…RWPR) and 33–62 (GRPR…HGRS). The segment covering 51–62 (RPRRGRAPHGRS) has biased composition (basic residues). 3 TPR repeats span residues 283-316 (AEFY…FENN), 361-394 (ALLL…GDHS), and 476-509 (SELA…RTNM).

It carries out the reaction a 2'-deoxyadenosine in DNA + S-adenosyl-L-methionine = an N(6)-methyl-2'-deoxyadenosine in DNA + S-adenosyl-L-homocysteine + H(+). A methylase, recognizes the double-stranded sequence 5'-GATATC-3', methylates A-? on both strands, and protects the DNA from cleavage by the CeqI endonuclease. In Rhodococcus hoagii (Corynebacterium equii), this protein is Type II methyltransferase M.CeqI (ceqIM).